The chain runs to 271 residues: Type III pantothenate kinase (271 aa).

6 to 13 lines the ATP pocket; that stretch reads DVRNTHTV. 109 to 112 contributes to the substrate binding site; the sequence is GADR. The active-site Proton acceptor is the aspartate 111. Aspartate 131 provides a ligand contact to K(+). Serine 134 is an ATP binding site. Threonine 186 is a substrate binding site.

Belongs to the type III pantothenate kinase family. In terms of assembly, homodimer. It depends on NH4(+) as a cofactor. Requires K(+) as cofactor.

It is found in the cytoplasm. It carries out the reaction (R)-pantothenate + ATP = (R)-4'-phosphopantothenate + ADP + H(+). The protein operates within cofactor biosynthesis; coenzyme A biosynthesis; CoA from (R)-pantothenate: step 1/5. In terms of biological role, catalyzes the phosphorylation of pantothenate (Pan), the first step in CoA biosynthesis. The protein is Type III pantothenate kinase of Mycolicibacterium vanbaalenii (strain DSM 7251 / JCM 13017 / BCRC 16820 / KCTC 9966 / NRRL B-24157 / PYR-1) (Mycobacterium vanbaalenii).